Reading from the N-terminus, the 341-residue chain is Phosphate acyltransferase (341 aa).

Belongs to the PlsX family. Homodimer. Probably interacts with PlsY.

The protein localises to the cytoplasm. It carries out the reaction a fatty acyl-[ACP] + phosphate = an acyl phosphate + holo-[ACP]. It functions in the pathway lipid metabolism; phospholipid metabolism. Its function is as follows. Catalyzes the reversible formation of acyl-phosphate (acyl-PO(4)) from acyl-[acyl-carrier-protein] (acyl-ACP). This enzyme utilizes acyl-ACP as fatty acyl donor, but not acyl-CoA. The chain is Phosphate acyltransferase from Vibrio cholerae serotype O1 (strain ATCC 39541 / Classical Ogawa 395 / O395).